The chain runs to 240 residues: Ribonuclease PH (240 aa).

Phosphate-binding positions include Arg-86 and 124-126; that span reads GTR.

Belongs to the RNase PH family. As to quaternary structure, homohexameric ring arranged as a trimer of dimers.

The enzyme catalyses tRNA(n+1) + phosphate = tRNA(n) + a ribonucleoside 5'-diphosphate. Phosphorolytic 3'-5' exoribonuclease that plays an important role in tRNA 3'-end maturation. Removes nucleotide residues following the 3'-CCA terminus of tRNAs; can also add nucleotides to the ends of RNA molecules by using nucleoside diphosphates as substrates, but this may not be physiologically important. Probably plays a role in initiation of 16S rRNA degradation (leading to ribosome degradation) during starvation. The protein is Ribonuclease PH of Rhodospirillum rubrum (strain ATCC 11170 / ATH 1.1.1 / DSM 467 / LMG 4362 / NCIMB 8255 / S1).